Reading from the N-terminus, the 125-residue chain is Holo-[acyl-carrier-protein] synthase (125 aa).

Mg(2+) is bound by residues D8 and E57.

This sequence belongs to the P-Pant transferase superfamily. AcpS family. It depends on Mg(2+) as a cofactor.

It is found in the cytoplasm. The enzyme catalyses apo-[ACP] + CoA = holo-[ACP] + adenosine 3',5'-bisphosphate + H(+). Its function is as follows. Transfers the 4'-phosphopantetheine moiety from coenzyme A to a Ser of acyl-carrier-protein. This is Holo-[acyl-carrier-protein] synthase from Halothermothrix orenii (strain H 168 / OCM 544 / DSM 9562).